The sequence spans 203 residues: Small ribosomal subunit protein uS4 (203 aa).

The S4 RNA-binding domain occupies 93 to 154 (RRLDNVVYRC…KSRNLDAVAD (62 aa)).

The protein belongs to the universal ribosomal protein uS4 family. Part of the 30S ribosomal subunit. Contacts protein S5. The interaction surface between S4 and S5 is involved in control of translational fidelity.

In terms of biological role, one of the primary rRNA binding proteins, it binds directly to 16S rRNA where it nucleates assembly of the body of the 30S subunit. With S5 and S12 plays an important role in translational accuracy. This is Small ribosomal subunit protein uS4 from Chlorobaculum tepidum (strain ATCC 49652 / DSM 12025 / NBRC 103806 / TLS) (Chlorobium tepidum).